A 260-amino-acid chain; its full sequence is Diphthine synthase (260 aa).

S-adenosyl-L-methionine is bound by residues L9, D85, I88, 113–114, L168, A202, and H227; that span reads TA.

The protein belongs to the diphthine synthase family. Homodimer.

It carries out the reaction 2-[(3S)-amino-3-carboxypropyl]-L-histidyl-[translation elongation factor 2] + 3 S-adenosyl-L-methionine = diphthine-[translation elongation factor 2] + 3 S-adenosyl-L-homocysteine + 3 H(+). It participates in protein modification; peptidyl-diphthamide biosynthesis. In terms of biological role, S-adenosyl-L-methionine-dependent methyltransferase that catalyzes the trimethylation of the amino group of the modified target histidine residue in translation elongation factor 2 (EF-2), to form an intermediate called diphthine. The three successive methylation reactions represent the second step of diphthamide biosynthesis. The sequence is that of Diphthine synthase from Haloquadratum walsbyi (strain DSM 16790 / HBSQ001).